A 600-amino-acid polypeptide reads, in one-letter code: Aspartate--tRNA(Asp/Asn) ligase (600 aa).

L-aspartate is bound at residue Glu-175. The tract at residues 199 to 202 is aspartate; that stretch reads QLFK. Arg-221 contributes to the L-aspartate binding site. ATP-binding positions include 221 to 223 and Gln-230; that span reads RDE. Residue His-453 participates in L-aspartate binding. Glu-487 is a binding site for ATP. Residue Arg-494 participates in L-aspartate binding. 539-542 serves as a coordination point for ATP; sequence GWDR. The segment at 564–600 is disordered; sequence GGVDPLTDAPAPITPLQRKESGIDAKPKAAENKPEEK. The span at 580-600 shows a compositional bias: basic and acidic residues; the sequence is QRKESGIDAKPKAAENKPEEK.

Belongs to the class-II aminoacyl-tRNA synthetase family. Type 1 subfamily. In terms of assembly, homodimer.

The protein localises to the cytoplasm. The catalysed reaction is tRNA(Asx) + L-aspartate + ATP = L-aspartyl-tRNA(Asx) + AMP + diphosphate. In terms of biological role, aspartyl-tRNA synthetase with relaxed tRNA specificity since it is able to aspartylate not only its cognate tRNA(Asp) but also tRNA(Asn). Reaction proceeds in two steps: L-aspartate is first activated by ATP to form Asp-AMP and then transferred to the acceptor end of tRNA(Asp/Asn). The chain is Aspartate--tRNA(Asp/Asn) ligase from Corynebacterium efficiens (strain DSM 44549 / YS-314 / AJ 12310 / JCM 11189 / NBRC 100395).